We begin with the raw amino-acid sequence, 58 residues long: UPF0434 protein Swoo_1821 (58 aa).

Belongs to the UPF0434 family.

The sequence is that of UPF0434 protein Swoo_1821 from Shewanella woodyi (strain ATCC 51908 / MS32).